A 146-amino-acid polypeptide reads, in one-letter code: uncharacterized protein (146 aa).

Positions 1–24 (MVIYYGKKNCTLLLLLFILCNIYS) are cleaved as a signal peptide. N-linked (GlcNAc...) asparagine glycosylation is found at Asn-99 and Asn-106.

This is an uncharacterized protein from Saccharomyces cerevisiae (strain ATCC 204508 / S288c) (Baker's yeast).